A 301-amino-acid chain; its full sequence is Probable alpha-L-glutamate ligase 1 (301 aa).

An ATP-grasp domain is found at Leu-104–Glu-287. ATP contacts are provided by residues Lys-141, Glu-178 to Tyr-179, Asp-187, and Arg-211 to Asn-213. Residues Asp-248, Glu-260, and Asn-262 each contribute to the Mg(2+) site. Asp-248, Glu-260, and Asn-262 together coordinate Mn(2+).

This sequence belongs to the RimK family. Mg(2+) serves as cofactor. It depends on Mn(2+) as a cofactor.

This Shewanella frigidimarina (strain NCIMB 400) protein is Probable alpha-L-glutamate ligase 1.